A 502-amino-acid chain; its full sequence is Glycerol kinase (502 aa).

Thr-15 is an ADP binding site. The ATP site is built by Thr-15, Thr-16, and Ser-17. Thr-15 serves as a coordination point for sn-glycerol 3-phosphate. Arg-19 is a binding site for ADP. 3 residues coordinate sn-glycerol 3-phosphate: Arg-85, Glu-86, and Tyr-137. Arg-85, Glu-86, and Tyr-137 together coordinate glycerol. His-233 bears the Phosphohistidine; by HPr mark. Asp-247 contacts sn-glycerol 3-phosphate. Glycerol contacts are provided by Asp-247 and Gln-248. Positions 269 and 312 each coordinate ADP. ATP is bound by residues Thr-269, Gly-312, Gln-316, and Gly-413. Gly-413 and Asn-417 together coordinate ADP.

Belongs to the FGGY kinase family. In terms of assembly, homotetramer and homodimer (in equilibrium). In terms of processing, the phosphoenolpyruvate-dependent sugar phosphotransferase system (PTS), including enzyme I, and histidine-containing protein (HPr) are required for the phosphorylation, which leads to the activation of the enzyme.

The catalysed reaction is glycerol + ATP = sn-glycerol 3-phosphate + ADP + H(+). It functions in the pathway polyol metabolism; glycerol degradation via glycerol kinase pathway; sn-glycerol 3-phosphate from glycerol: step 1/1. With respect to regulation, activated by phosphorylation and inhibited by fructose 1,6-bisphosphate (FBP). In terms of biological role, key enzyme in the regulation of glycerol uptake and metabolism. Catalyzes the phosphorylation of glycerol to yield sn-glycerol 3-phosphate. The sequence is that of Glycerol kinase from Streptococcus agalactiae serotype Ia (strain ATCC 27591 / A909 / CDC SS700).